Here is a 433-residue protein sequence, read N- to C-terminus: Glutamate-1-semialdehyde 2,1-aminomutase (433 aa).

Position 271 is an N6-(pyridoxal phosphate)lysine (Lys271).

It belongs to the class-III pyridoxal-phosphate-dependent aminotransferase family. HemL subfamily. In terms of assembly, homodimer. Pyridoxal 5'-phosphate serves as cofactor.

The protein resides in the cytoplasm. The catalysed reaction is (S)-4-amino-5-oxopentanoate = 5-aminolevulinate. It functions in the pathway porphyrin-containing compound metabolism; protoporphyrin-IX biosynthesis; 5-aminolevulinate from L-glutamyl-tRNA(Glu): step 2/2. It participates in porphyrin-containing compound metabolism; chlorophyll biosynthesis. The chain is Glutamate-1-semialdehyde 2,1-aminomutase from Prochlorococcus marinus subsp. pastoris (strain CCMP1986 / NIES-2087 / MED4).